The sequence spans 1591 residues: Rho guanine nucleotide exchange factor TIAM1 (1591 aa).

The tract at residues 1-78 (MGNAESQHVE…AENGLEPFSQ (78 aa)) is disordered. Residue Gly-2 is the site of N-myristoyl glycine attachment. The segment covering 7-19 (QHVEHEFYGEKHA) has biased composition (basic and acidic residues). Positions 20-49 (SLGRKHTSRSLRLSHKTRRTRHASSGKVIH) are enriched in basic residues. Residues 53–67 (EVSTRSSSTPSIPQS) show a composition bias toward low complexity. Phosphoserine is present on Ser-231. 2 disordered regions span residues 298-379 (SEGA…GDAA) and 393-422 (MSTTNSESLEEAGSAHSDEQSSGTLSSPGQ). Polar residues-rich tracts occupy residues 300–313 (GATNPQISHSNSMQ) and 340–361 (TTDTDLLSRRSNATNSSYSPTT). Phosphoserine is present on residues Ser-356 and Ser-358. Residues 367–377 (GSDSGSSSTGD) show a composition bias toward low complexity. A compositionally biased stretch (polar residues) spans 412 to 422 (QSSGTLSSPGQ). The PH 1 domain maps to 434–549 (VRKAGALAVK…TAIHSACATA (116 aa)). Ser-695 carries the phosphoserine modification. Residues 765-832 (TPSWFCLPNN…QPEEDIYELL (68 aa)) enclose the RBD domain. The residue at position 829 (Tyr-829) is a Phosphotyrosine; by NTRK2. The 64-residue stretch at 845–908 (SIHIEKSDTA…NNRAADALNS (64 aa)) folds into the PDZ domain. Residues 939 to 1034 (SPPHRVDGPA…TGPQLATMRQ (96 aa)) are disordered. A compositionally biased stretch (polar residues) spans 958–975 (LTSNPGHSLCSEQGSSAE). Residues 977–990 (APEETEGPDLESSD) are compositionally biased toward acidic residues. A compositionally biased stretch (low complexity) spans 1014 to 1024 (PSDQSPSPQDS). Residues 1025–1034 (TGPQLATMRQ) show a composition bias toward polar residues. The region spanning 1040-1234 (KLRKVICELL…NKVASHINEM (195 aa)) is the DH domain. The region spanning 1261–1397 (DLSMGDLLLH…KAVHSILRDK (137 aa)) is the PH 2 domain. Tyr-1323 is modified (phosphotyrosine). Residues Lys-1404 and Lys-1420 each participate in a glycyl lysine isopeptide (Lys-Gly) (interchain with G-Cter in ubiquitin) cross-link. Residues 1456-1482 (TIDSDAVSASSPEKESQQPPGGGDTDR) form a disordered region. Ser-1519 is modified (phosphoserine).

Belongs to the TIAM family. In terms of assembly, component of the Par polarity complex, composed of at least phosphorylated PRKCZ, PARD3 and TIAM1. Interacts with NTRK2; mediates the activation of RAC1 by BDNF. Interacts with MAPK8IP2 and CD44. Interacts with BAIAP2. Interacts with EPHA8; regulates clathrin-mediated endocytosis of EPHA8. Interacts with PARD3. Interacts (via PDZ domain) with CNTNAP4, SDC1 and SDC3 (via C-terminus). In terms of processing, ubiquitinated. Undergoes 'Lys-48' ubiquitination at Lys-1404 and Lys-1420 by a CUL3(KBTBD6/7) E3 ubiquitin ligase complex composed of CUL3, RBX1, KBTBD6 and KBTBD7. 'Lys-48' ubiquitination at Lys-1404 and Lys-1420 triggers proteasomal degradation. Ubiquitination at Lys-1404 and Lys-1420 by CUL3(KBTBD6/7) also requires the membrane-associated protein GABARAP and may therefore be spatially restricted within the cell. As to expression, found in virtually all analyzed tumor cell lines including B- and T-lymphomas, neuroblastomas, melanomas and carcinomas.

The protein localises to the cell junction. Its subcellular location is the cell membrane. In terms of biological role, guanyl-nucleotide exchange factor that activates RHO-like proteins and connects extracellular signals to cytoskeletal activities. Activates RAC1, CDC42, and to a lesser extent RHOA and their downstream signaling to regulate processes like cell adhesion and cell migration. In Homo sapiens (Human), this protein is Rho guanine nucleotide exchange factor TIAM1.